A 215-amino-acid polypeptide reads, in one-letter code: 2-phospho-L-lactate guanylyltransferase (215 aa).

This sequence belongs to the CofC family. In terms of assembly, homodimer.

It catalyses the reaction (2S)-2-phospholactate + GTP + H(+) = (2S)-lactyl-2-diphospho-5'-guanosine + diphosphate. The protein operates within cofactor biosynthesis; coenzyme F420 biosynthesis. Functionally, guanylyltransferase that catalyzes the activation of (2S)-2-phospholactate (2-PL) as (2S)-lactyl-2-diphospho-5'-guanosine, via the condensation of 2-PL with GTP. It is involved in the biosynthesis of coenzyme F420, a hydride carrier cofactor. This chain is 2-phospho-L-lactate guanylyltransferase, found in Methanoculleus marisnigri (strain ATCC 35101 / DSM 1498 / JR1).